Here is a 512-residue protein sequence, read N- to C-terminus: Pantothenate transporter FEN2 (512 aa).

The Cytoplasmic segment spans residues M1–R27. Residues L28–N48 form a helical membrane-spanning segment. Residues Y49–T79 are Extracellular-facing. The chain crosses the membrane as a helical span at residues V80–P100. Residues P101–R102 lie on the Cytoplasmic side of the membrane. Residues I103 to T123 traverse the membrane as a helical segment. The Extracellular segment spans residues S124–R132. Residues F133–W153 form a helical membrane-spanning segment. Topologically, residues Y154 to A164 are cytoplasmic. A helical membrane pass occupies residues I165–F185. Topologically, residues T186 to R198 are extracellular. Residues W199–F219 form a helical membrane-spanning segment. Over P220–R271 the chain is Cytoplasmic. The helical transmembrane segment at W272–S292 threads the bilayer. Over N293–N312 the chain is Extracellular. Residues Y313–S333 form a helical membrane-spanning segment. Over K334–H342 the chain is Cytoplasmic. The chain crosses the membrane as a helical span at residues V343 to L363. Over N364–Q372 the chain is Extracellular. A helical transmembrane segment spans residues Y373–C393. Topologically, residues H394–A401 are cytoplasmic. A helical transmembrane segment spans residues I402–F422. At F423–G434 the chain is on the extracellular side. Residues C435–L455 form a helical membrane-spanning segment. The Cytoplasmic portion of the chain corresponds to Q456 to R512. The interval Y468 to R512 is disordered. Residues P475–E496 show a composition bias toward acidic residues.

It belongs to the major facilitator superfamily. Allantoate permease family.

The protein localises to the cell membrane. Functionally, transports pantothenate into the cell. Also involved in the catabolite repression-mediated regulation of ergosterol biosynthesis and in fenpropimorph resistance. This chain is Pantothenate transporter FEN2 (FEN2), found in Saccharomyces cerevisiae (strain ATCC 204508 / S288c) (Baker's yeast).